Here is a 208-residue protein sequence, read N- to C-terminus: Pyridoxine/pyridoxamine 5'-phosphate oxidase (208 aa).

Residues 55–60 (RMVLLK), 70–71 (YT), K77, and Q99 each bind FMN. K60 is a substrate binding site. Residues Y117, R121, and S125 each contribute to the substrate site. FMN contacts are provided by residues 134-135 (QS) and W180. Substrate is bound at residue 186-188 (RIH). FMN is bound at residue R190.

Belongs to the pyridoxamine 5'-phosphate oxidase family. As to quaternary structure, homodimer. Requires FMN as cofactor.

The enzyme catalyses pyridoxamine 5'-phosphate + O2 + H2O = pyridoxal 5'-phosphate + H2O2 + NH4(+). It catalyses the reaction pyridoxine 5'-phosphate + O2 = pyridoxal 5'-phosphate + H2O2. Its pathway is cofactor metabolism; pyridoxal 5'-phosphate salvage; pyridoxal 5'-phosphate from pyridoxamine 5'-phosphate: step 1/1. The protein operates within cofactor metabolism; pyridoxal 5'-phosphate salvage; pyridoxal 5'-phosphate from pyridoxine 5'-phosphate: step 1/1. In terms of biological role, catalyzes the oxidation of either pyridoxine 5'-phosphate (PNP) or pyridoxamine 5'-phosphate (PMP) into pyridoxal 5'-phosphate (PLP). In Pelagibacter ubique (strain HTCC1062), this protein is Pyridoxine/pyridoxamine 5'-phosphate oxidase.